A 433-amino-acid polypeptide reads, in one-letter code: Protein translocase subunit SecY (433 aa).

Transmembrane regions (helical) follow at residues 17 to 37, 71 to 91, 117 to 137, 141 to 161, 184 to 204, 212 to 232, 268 to 288, 310 to 330, 366 to 386, and 388 to 408; these read IIFTIFMLIICRIGSFIPIPG, IFALAIMPYITASIIIQLMSV, LTVLLASFQAYGVALSLESMV, GPVVILAGFFFRVTTVITLVV, LIIFIGIISGVPSAIISMFEL, PLIAITVCIGVVLLIAIIIFF, GVIPPIFASSILLFPTTLANF, YILLYVVLIMFFSFFYTAIVF, LTVIGGLYLSIICVIPELLMN, and YVISLSLGGTSFLIVVNVVLD.

This sequence belongs to the SecY/SEC61-alpha family. As to quaternary structure, component of the Sec protein translocase complex. Heterotrimer consisting of SecY, SecE and SecG subunits. The heterotrimers can form oligomers, although 1 heterotrimer is thought to be able to translocate proteins. Interacts with the ribosome. Interacts with SecDF, and other proteins may be involved. Interacts with SecA.

It is found in the cell inner membrane. In terms of biological role, the central subunit of the protein translocation channel SecYEG. Consists of two halves formed by TMs 1-5 and 6-10. These two domains form a lateral gate at the front which open onto the bilayer between TMs 2 and 7, and are clamped together by SecE at the back. The channel is closed by both a pore ring composed of hydrophobic SecY resides and a short helix (helix 2A) on the extracellular side of the membrane which forms a plug. The plug probably moves laterally to allow the channel to open. The ring and the pore may move independently. In Rickettsia typhi (strain ATCC VR-144 / Wilmington), this protein is Protein translocase subunit SecY.